The following is a 316-amino-acid chain: Acetyl-coenzyme A carboxylase carboxyl transferase subunit alpha (316 aa).

The CoA carboxyltransferase C-terminal domain maps to 39 to 293; that stretch reads KLEEKNAQLT…KKHLQANLTN (255 aa).

Belongs to the AccA family. As to quaternary structure, acetyl-CoA carboxylase is a heterohexamer composed of biotin carboxyl carrier protein (AccB), biotin carboxylase (AccC) and two subunits each of ACCase subunit alpha (AccA) and ACCase subunit beta (AccD).

It localises to the cytoplasm. It catalyses the reaction N(6)-carboxybiotinyl-L-lysyl-[protein] + acetyl-CoA = N(6)-biotinyl-L-lysyl-[protein] + malonyl-CoA. Its pathway is lipid metabolism; malonyl-CoA biosynthesis; malonyl-CoA from acetyl-CoA: step 1/1. Functionally, component of the acetyl coenzyme A carboxylase (ACC) complex. First, biotin carboxylase catalyzes the carboxylation of biotin on its carrier protein (BCCP) and then the CO(2) group is transferred by the carboxyltransferase to acetyl-CoA to form malonyl-CoA. This chain is Acetyl-coenzyme A carboxylase carboxyl transferase subunit alpha, found in Coxiella burnetii (strain RSA 331 / Henzerling II).